Here is a 185-residue protein sequence, read N- to C-terminus: Ribosome-recycling factor (185 aa).

Belongs to the RRF family.

It localises to the cytoplasm. Its function is as follows. Responsible for the release of ribosomes from messenger RNA at the termination of protein biosynthesis. May increase the efficiency of translation by recycling ribosomes from one round of translation to another. This Geobacter sulfurreducens (strain ATCC 51573 / DSM 12127 / PCA) protein is Ribosome-recycling factor.